The following is a 1038-amino-acid chain: MDLNGDSNAKRKRSSISAAAERPAKHLRPENSSLTPGDTTPANGTVYDVEDDAESSHLIPIAAAPADSPEWQATIEEVVKSVVSIHFCQTCSFDTELSMSSQATGFVVDAERGYILTNRHVVCPGPFWGYVIFDNHEECDVRPVYRDPVHDFGILKFDPKAIRYLKLTELKLQPDAARVGSEIRVVGNDAGEKLSILSGVISRLDRNAPEYGEGYSDFNTNYIQAAAAASGGSSGSPVVNIDGHAIALQAGGRADGAATDYFLPLDRPLRALNCIRRGEPVTRGTIQTQWILKPFDECRRLGLTPEWEAKVRKAAPTETSMLVAEIILPEGPADGKLEEGDVLLQVNGELLTQFIRLDDILDSSVGKTVRLLVQRGGQNVELECEVGDLHAITPDRFVTVAGGTFHDLSYQQARLYAIATRGVYVCEAAGSFKLENTLSGWLIDSVDKRPTRNLEEFVEVMKSIPDRSRVVISYRHIRDLHTRGTSIVYIDRHWHPKMRLAVRNDETGLWDFSDLADPIPALPPVPRKANFIQLDGVSQPAAAEIVRSFVRVSCTMPLKLDGYPQAKKTGFGLVIDAEKGLVVVSRAIVPYDLCDINVTVADSIIVSAKVVFLHPLQNYTIVQYDPSLVQAPVQSARLSTEYIKQGQSTIFVGFNQNFRIVVAKTAVTDITTVSIPANASAPRYRAINLDAITVDTGLSGQCSNGVLVGEDGVVQALWLNYLGERTPSSHKDVEYHLGFATPALLPVASKVQAGEMPKLRILNMESYVVQMSQARIMGVSEEWIQRVTQANPSRHQLFMVRKVDCPPAGFSTTAHDSFQEGDIILTLDGQLITRVSELDIMYDKDVLEALIVRNGQEMKIQVPTVPTEDLETDRAVVFCGAVLQKPHHAVRQQISKLHSEVYVSARSRGSPAYQYGLSPTNFITAVNGVPTPNLDTFVQEVSKIPDNTYFRLRAVTFDNVPWVVTMKKNDHYFPMSEYIKDPAHPAGWKTVSHDKAKHKDGIAPDAANLNPDAMDEGFDDVSELEPEVRLEVGHWTVR.

Residues 1–47 (MDLNGDSNAKRKRSSISAAAERPAKHLRPENSSLTPGDTTPANGTVY) are disordered. Polar residues predominate over residues 30–43 (ENSSLTPGDTTPAN). The tract at residues 82-275 (VVSIHFCQTC…DRPLRALNCI (194 aa)) is serine protease. Residues His120, Asp151, and Ser233 each act as charge relay system in the active site. 2 PDZ domains span residues 289 to 374 (QWIL…LLVQ) and 877 to 958 (VFCG…VTFD).

The protein belongs to the peptidase S1C family.

Its subcellular location is the nucleus. Its function is as follows. Nuclear serine protease which mediates apoptosis. This chain is Pro-apoptotic serine protease nma111 (nma111), found in Aspergillus terreus (strain NIH 2624 / FGSC A1156).